A 207-amino-acid polypeptide reads, in one-letter code: Urease accessory protein UreG (207 aa).

GTP is bound at residue 14–21; the sequence is GPVGSGKT.

This sequence belongs to the SIMIBI class G3E GTPase family. UreG subfamily. As to quaternary structure, homodimer. UreD, UreF and UreG form a complex that acts as a GTP-hydrolysis-dependent molecular chaperone, activating the urease apoprotein by helping to assemble the nickel containing metallocenter of UreC. The UreE protein probably delivers the nickel.

The protein localises to the cytoplasm. In terms of biological role, facilitates the functional incorporation of the urease nickel metallocenter. This process requires GTP hydrolysis, probably effectuated by UreG. In Chelativorans sp. (strain BNC1), this protein is Urease accessory protein UreG.